The primary structure comprises 184 residues: MYVIAGLGNPGREYEGTRHNVGFMVIDELAKKLGMNVTKLKFKSLVGEGNFKGEKIILLKPQTFMNSSGEALYDAVNFYKIPLENVIVIYDDKDLDLGKIRIRKKGSSGGHNGMNSIIYLLNSEEFPRVRIGIGKPQKDLVSHVLGKFEESEKKLIDEAVIKAADAVIDIIENGIEHAMSKFNG.

A tRNA-binding site is contributed by Y14. Residue H19 is the Proton acceptor of the active site. TRNA is bound by residues F64, N66, and N112.

It belongs to the PTH family. In terms of assembly, monomer.

It is found in the cytoplasm. The catalysed reaction is an N-acyl-L-alpha-aminoacyl-tRNA + H2O = an N-acyl-L-amino acid + a tRNA + H(+). Its function is as follows. Hydrolyzes ribosome-free peptidyl-tRNAs (with 1 or more amino acids incorporated), which drop off the ribosome during protein synthesis, or as a result of ribosome stalling. Catalyzes the release of premature peptidyl moieties from peptidyl-tRNA molecules trapped in stalled 50S ribosomal subunits, and thus maintains levels of free tRNAs and 50S ribosomes. The chain is Peptidyl-tRNA hydrolase from Thermoanaerobacter sp. (strain X514).